Reading from the N-terminus, the 92-residue chain is Alpha-conotoxin-like Rt20.1 (92 aa).

The N-terminal stretch at 1 to 24 (MPKLEMMLLVLLILPLSYFSAAGG) is a signal peptide. Positions 25 to 45 (QVVQGDLRSDVLARYLQRGDR) are excised as a propeptide. Position 49 is a 4-carboxyglutamate (E49). A 4-hydroxyproline modification is found at P55. 4 disulfide bridges follow: C63–C72, C68–C80, C73–C90, and C78–C92.

This sequence belongs to the conotoxin D superfamily. As to quaternary structure, hetero-, homo- or pseudo-homodimer (identical sequence, different post-translational modifications). Expressed by the venom duct.

It is found in the secreted. Alpha-conotoxins act on postsynaptic membranes, they bind to the nicotinic acetylcholine receptors (nAChR) and thus inhibit them. Through its two C-terminal domains, this homodimeric protein would bind to two nAChR allosteric sites, located outside the nAChR C-loop of the principal binding face and at the adjacent binding interface in a clockwise direction. This toxin specifically blocks mammalian neuronal nAChR of the alpha-7/CHRNA7, alpha-3-beta-2/CHRNA3-CHRNB2 and alpha-4-beta-2/CHRNA4-CHRNB2 subtypes. The polypeptide is Alpha-conotoxin-like Rt20.1 (Conus rattus (Rat cone)).